The primary structure comprises 234 residues: 1-(5-phosphoribosyl)-5-[(5-phosphoribosylamino)methylideneamino] imidazole-4-carboxamide isomerase (234 aa).

The active-site Proton acceptor is the aspartate 9. The active-site Proton donor is aspartate 131.

It belongs to the HisA/HisF family.

It localises to the cytoplasm. It catalyses the reaction 1-(5-phospho-beta-D-ribosyl)-5-[(5-phospho-beta-D-ribosylamino)methylideneamino]imidazole-4-carboxamide = 5-[(5-phospho-1-deoxy-D-ribulos-1-ylimino)methylamino]-1-(5-phospho-beta-D-ribosyl)imidazole-4-carboxamide. Its pathway is amino-acid biosynthesis; L-histidine biosynthesis; L-histidine from 5-phospho-alpha-D-ribose 1-diphosphate: step 4/9. This is 1-(5-phosphoribosyl)-5-[(5-phosphoribosylamino)methylideneamino] imidazole-4-carboxamide isomerase from Staphylococcus epidermidis (strain ATCC 35984 / DSM 28319 / BCRC 17069 / CCUG 31568 / BM 3577 / RP62A).